The sequence spans 1429 residues: MVTQVLIAHTGQRLEIDSRTITSLNGLKESVASQTSIPVECLIALTPQGRSLRWQPTQPETEIYIYDSRLTQRSQPGASSPPLSELPLPRYNAHTPPNSIEDTRSIPAWQKLFETRRAWAIDVVEDCARMDAATRERYAEMDVMLRCLDAAVANLENAVKGLENKYVELKEWSTSAQAEYSALATGFDRYLSLARGIAISSSMARFMTSRDDGGWKGRPQRQSTLEDLVDLELARQAGKLAPSALRKFKDRITNLDKAATHLFQDADTLMHKFETTMSRSALSHDGESLHLLKDIEALANKIDNDYNVTLEYTSSTRDTLLQVSKTAAHHTERLLPSIQKRALEMGDILCYATKARNSLAAESIEFMRSITEITSDSHSVKSQISETGQEDELATFDHLRLIQQIPYLYASFVAEAIRRREWLDKVKQDSTTLANEMAIFHEEEAKRRRRWHKSIGAVFGPAPTADSKVPNLEINLRGDDGEWPLMTRKDLDDFFNALRNQKADPELVVEIEKLIADMDKSTRQQSRRMKAFKNGSVHETALGRSGLLVRGDDDLLRSLQADKTRLESKLKTAESRVRRLEDLLHRQTQASRPNVGNLFQNPSQQVLDRNDSISSLRNPRAVDDRSRSLDGLETLIHRTQQLETELNTERERCVVLEREINALTTLHNDLKGQMDEANSTKKDLLQNMEALKREFTEERKSLEEEVKQLKARLEYTEDEIEHFGESRENEKASYDEKVHFLELEVERLTRERRDDSLKADDQVVLLQNEARLQRERIAAQDIELRAAQDEIRVLSKRLEAVTEDKQKYRQALEDIWECLAPADDVPTELPDLLEGITGKAADILNTKQGVEGDMSLMKLNVDTLQNNIRTLRSEMDFTKDRLTEEESVSLRLREKFSEERAKVVAMEGELAHGREQLHEFRVKIADGETGSEYMRKRLEDEEQNLASMTEELAAGQTQVQKMEEEVTRFKAKLHQTQMQLSELSIRLESRTECAKDLTQLLWSQNDRLTRLLERLGFSISREEDGTMHIQRTPRSERSLATTANPNDSDPSSSLRRSSTLNARPVTDNADLELLQWMSSATPEAEVEKYKIFMGLIGSLDMDVFADAVYRRVKDVEHMARKLQREARAYREKAHSFQKEAHDKIAFKHFKEGDLALFLPTRNQSTGAWAAFNVGFPHYFLREQDSHRLRNREWLVARIMRIQERVVDLSKSLQHDQAGETRKDGARGETESLDDDENDNPFDLSDGLRWYLIEAVEDKPGAPSTPGLAKSTVAANNVEAMADMRTQGHISKARGLTGRGGTPLGIEGVSKTLSKSLESRRSSTGSRKTLPFVIGASSRGRESALASETNSLRAVPADNNSSAPTNAAQQHMSPTDKLKDESLQETPQQTNSISAEGESMTIAARNDQAILQPSQTHSEVRNEIESLIGP.

Positions 71–99 (TQRSQPGASSPPLSELPLPRYNAHTPPNS) are disordered. The span at 80–89 (SPPLSELPLP) shows a compositional bias: low complexity. 4 coiled-coil regions span residues 143–173 (VMLR…KEWS), 553–590 (DDLL…QTQA), 632–815 (LETL…LEDI), and 851–989 (EGDM…RLES). The disordered stretch occupies residues 1024 to 1061 (DGTMHIQRTPRSERSLATTANPNDSDPSSSLRRSSTLN). The span at 1042 to 1061 (TANPNDSDPSSSLRRSSTLN) shows a compositional bias: low complexity. A coiled-coil region spans residues 1105–1143 (ADAVYRRVKDVEHMARKLQREARAYREKAHSFQKEAHDK). The segment covering 1209 to 1229 (SKSLQHDQAGETRKDGARGET) has biased composition (basic and acidic residues). 2 disordered regions span residues 1209 to 1241 (SKSL…DNPF) and 1336 to 1429 (SSRG…LIGP). A compositionally biased stretch (acidic residues) spans 1230-1239 (ESLDDDENDN). Polar residues-rich tracts occupy residues 1345–1372 (ASET…QHMS) and 1383–1393 (QETPQQTNSIS).

It belongs to the ATG11 family. As to quaternary structure, homodimer.

The protein localises to the preautophagosomal structure membrane. It is found in the vacuole membrane. In terms of biological role, involved in cytoplasm to vacuole transport (Cvt), pexophagy, mitophagy and nucleophagy. Recruits mitochondria for their selective degradation via autophagy (mitophagy) during starvation. Works as scaffold proteins that recruit ATG proteins to the pre-autophagosome (PAS), the site of vesicle/autophagosome formation. Required for the Cvt vesicles completion. The chain is Autophagy-related protein 11 (apg-8) from Neurospora crassa (strain ATCC 24698 / 74-OR23-1A / CBS 708.71 / DSM 1257 / FGSC 987).